The sequence spans 371 residues: Carbamoyl phosphate synthase small chain (371 aa).

The segment at 1-190 (MRKTAILALE…LYRENEKPLV (190 aa)) is CPSase. The L-glutamine site is built by Ser47, Gly237, and Gly239. In terms of domain architecture, Glutamine amidotransferase type-1 spans 189-371 (LVAVIDFGVK…FKEFVKMAQG (183 aa)). Catalysis depends on Cys264, which acts as the Nucleophile. Residues Leu265, Gln268, Asn306, and Phe309 each contribute to the L-glutamine site. Residues His348 and Glu350 contribute to the active site.

This sequence belongs to the CarA family. As to quaternary structure, composed of two chains; the small (or glutamine) chain promotes the hydrolysis of glutamine to ammonia, which is used by the large (or ammonia) chain to synthesize carbamoyl phosphate. Tetramer of heterodimers (alpha,beta)4.

The enzyme catalyses hydrogencarbonate + L-glutamine + 2 ATP + H2O = carbamoyl phosphate + L-glutamate + 2 ADP + phosphate + 2 H(+). It carries out the reaction L-glutamine + H2O = L-glutamate + NH4(+). It participates in amino-acid biosynthesis; L-arginine biosynthesis; carbamoyl phosphate from bicarbonate: step 1/1. The protein operates within pyrimidine metabolism; UMP biosynthesis via de novo pathway; (S)-dihydroorotate from bicarbonate: step 1/3. Its function is as follows. Small subunit of the glutamine-dependent carbamoyl phosphate synthetase (CPSase). CPSase catalyzes the formation of carbamoyl phosphate from the ammonia moiety of glutamine, carbonate, and phosphate donated by ATP, constituting the first step of 2 biosynthetic pathways, one leading to arginine and/or urea and the other to pyrimidine nucleotides. The small subunit (glutamine amidotransferase) binds and cleaves glutamine to supply the large subunit with the substrate ammonia. This chain is Carbamoyl phosphate synthase small chain, found in Aquifex aeolicus (strain VF5).